Here is a 271-residue protein sequence, read N- to C-terminus: Ribosomal RNA small subunit methyltransferase I (271 aa).

Belongs to the methyltransferase superfamily. RsmI family.

Its subcellular location is the cytoplasm. It catalyses the reaction cytidine(1402) in 16S rRNA + S-adenosyl-L-methionine = 2'-O-methylcytidine(1402) in 16S rRNA + S-adenosyl-L-homocysteine + H(+). Functionally, catalyzes the 2'-O-methylation of the ribose of cytidine 1402 (C1402) in 16S rRNA. In Campylobacter fetus subsp. fetus (strain 82-40), this protein is Ribosomal RNA small subunit methyltransferase I.